A 663-amino-acid polypeptide reads, in one-letter code: Protein pat-12 (663 aa).

Over residues 1–15 (MTSHIATETSVNRWS) the composition is skewed to polar residues. 4 disordered regions span residues 1–78 (MTSH…SGDY), 367–430 (RFEE…GQET), 517–546 (FRRG…DYRR), and 597–663 (PMPA…RRRR). Residues 367–380 (RFEETRRTEEVERR) are compositionally biased toward basic and acidic residues. The segment covering 381 to 400 (VQRREKKERRSRHHSSSRHH) has biased composition (basic residues). Residues 517–526 (FRRGSQQQVS) are compositionally biased toward polar residues. Basic and acidic residues-rich tracts occupy residues 620 to 640 (FNKE…KPVD) and 649 to 663 (NYKR…RRRR).

As to quaternary structure, interacts with vab-10 (via plankin domain). In terms of tissue distribution, isoform a: Expressed in the uterus, the vulva, the rectum, mechanosensory neurons and in head and tail neurons. Isoform e: Expressed in spermatheca and weakly in the vulva. Isoform f: Expressed in spermatheca and weakly in the vulva. Isoform i: Expressed in spermatheca and weakly in the vulva.

The protein resides in the apical cell membrane. The protein localises to the basal cell membrane. It is found in the cytoplasm. It localises to the cell junction. Its subcellular location is the hemidesmosome. The protein resides in the cell membrane. The protein localises to the cytoskeleton. In terms of biological role, required for embryonic morphology and development. Plays both a functional and a structural role in the maintenance and probably biogenesis of fibrous organelles, a hemidesomosome-like junction structure, which ensures muscle stability and muscle connection to the external cuticle. The polypeptide is Protein pat-12 (Caenorhabditis elegans).